Reading from the N-terminus, the 660-residue chain is Bifunctional polymyxin resistance protein ArnA (660 aa).

The formyltransferase ArnAFT stretch occupies residues 1–304 (MKTVVFAYHD…MLGLVQGSRL (304 aa)). Residue 86 to 88 (HLI) participates in (6R)-10-formyltetrahydrofolate binding. The active-site Proton donor; for formyltransferase activity is the H104. Residues R114 and 136–140 (VKRAD) each bind (6R)-10-formyltetrahydrofolate. The dehydrogenase ArnADH stretch occupies residues 314 to 660 (RRTRVLILGV…RTVDLTDKPS (347 aa)). Residues D347 and 368–369 (DI) each bind NAD(+). UDP-alpha-D-glucuronate contacts are provided by residues A393, Y398, and 432–433 (TS). E434 acts as the Proton acceptor; for decarboxylase activity in catalysis. Residues R460, N492, 526 to 535 (KLIDGGKQKR), and Y613 each bind UDP-alpha-D-glucuronate. Catalysis depends on R619, which acts as the Proton donor; for decarboxylase activity.

The protein in the N-terminal section; belongs to the Fmt family. UDP-L-Ara4N formyltransferase subfamily. This sequence in the C-terminal section; belongs to the NAD(P)-dependent epimerase/dehydratase family. UDP-glucuronic acid decarboxylase subfamily. As to quaternary structure, homohexamer, formed by a dimer of trimers.

The catalysed reaction is UDP-alpha-D-glucuronate + NAD(+) = UDP-beta-L-threo-pentopyranos-4-ulose + CO2 + NADH. It catalyses the reaction UDP-4-amino-4-deoxy-beta-L-arabinose + (6R)-10-formyltetrahydrofolate = UDP-4-deoxy-4-formamido-beta-L-arabinose + (6S)-5,6,7,8-tetrahydrofolate + H(+). The protein operates within nucleotide-sugar biosynthesis; UDP-4-deoxy-4-formamido-beta-L-arabinose biosynthesis; UDP-4-deoxy-4-formamido-beta-L-arabinose from UDP-alpha-D-glucuronate: step 1/3. It participates in nucleotide-sugar biosynthesis; UDP-4-deoxy-4-formamido-beta-L-arabinose biosynthesis; UDP-4-deoxy-4-formamido-beta-L-arabinose from UDP-alpha-D-glucuronate: step 3/3. Its pathway is bacterial outer membrane biogenesis; lipopolysaccharide biosynthesis. In terms of biological role, bifunctional enzyme that catalyzes the oxidative decarboxylation of UDP-glucuronic acid (UDP-GlcUA) to UDP-4-keto-arabinose (UDP-Ara4O) and the addition of a formyl group to UDP-4-amino-4-deoxy-L-arabinose (UDP-L-Ara4N) to form UDP-L-4-formamido-arabinose (UDP-L-Ara4FN). The modified arabinose is attached to lipid A and is required for resistance to polymyxin and cationic antimicrobial peptides. The sequence is that of Bifunctional polymyxin resistance protein ArnA from Shigella flexneri.